A 287-amino-acid polypeptide reads, in one-letter code: Protein UL24 homolog (287 aa).

2 disordered regions span residues methionine 1 to arginine 33 and arginine 254 to leucine 287. Residues histidine 16–arginine 33 show a composition bias toward basic residues.

It belongs to the herpesviridae UL24 family.

It is found in the virion. The protein localises to the host cytoplasm. It localises to the host nucleus. Its subcellular location is the host nucleolus. The protein resides in the host Golgi apparatus. Its function is as follows. May participate in nuclear egress of viral particles. Plays a role in the dispersal of several host nucleolar proteins including NCL/nucleolin and NPM1. Since deletion of host NCL/nucleolin negatively impact on nuclear egress, UL24 supposedly acts on this process through its effect on host nucleoli. This Infectious laryngotracheitis virus (strain Thorne V882) (ILTV) protein is Protein UL24 homolog.